The chain runs to 1277 residues: NPC intracellular cholesterol transporter 1 (1277 aa).

Positions Met1–Ser22 are cleaved as a signal peptide. Residues Gln23–Tyr269 are Lumenal-facing. 9 disulfide bridges follow: Cys25–Cys74, Cys31–Cys42, Cys63–Cys109, Cys75–Cys113, Cys97–Cys238, Cys100–Cys160, Cys177–Cys184, Cys227–Cys243, and Cys240–Cys247. Residue Asn41 participates in cholesterol binding. Asn70 carries an N-linked (GlcNAc...) asparagine glycan. Gln79 is a cholesterol binding site. N-linked (GlcNAc...) asparagine glycans are attached at residues Asn122 and Asn137. An important for cholesterol binding and cholesterol transfer from NPC1 to liposomes region spans residues Leu175–Ile205. Residues Asn185, Asn222, and Asn228 are each glycosylated (N-linked (GlcNAc...) asparagine). The helical transmembrane segment at Val270–Val290 threads the bilayer. Residues Trp291 to Pro350 are Cytoplasmic-facing. A helical transmembrane segment spans residues Thr351–Val371. Residues Gln372–Val621 are Lumenal-facing. N-linked (GlcNAc...) asparagine glycans are attached at residues Asn414, Asn459, Asn478, and Asn524. Cystine bridges form between Cys468–Cys479 and Cys516–Cys533. The region spanning Asp620–Leu785 is the SSD domain. Residues Phe622–Ile642 form a helical membrane-spanning segment. Residues Gln643–Lys653 are Cytoplasmic-facing. The chain crosses the membrane as a helical span at residues Ile654–Ile674. Topologically, residues Phe675 to Thr683 are lumenal. The chain crosses the membrane as a helical span at residues Leu684 to Ile704. The Cytoplasmic segment spans residues Leu705–Glu730. A helical transmembrane segment spans residues Val731–Leu751. Residues Ser752 to Thr759 are Lumenal-facing. The chain crosses the membrane as a helical span at residues Phe760–Val780. Over Ser781–Asp832 the chain is Cytoplasmic. The chain crosses the membrane as a helical span at residues Trp833 to Val853. Over Asn854–Thr1097 the chain is Lumenal. Asn868 and Asn898 each carry an N-linked (GlcNAc...) asparagine glycan. A disulfide bridge links Cys909 with Cys914. N-linked (GlcNAc...) asparagine glycosylation is found at Asn916, Asn961, Asn968, and Asn1063. Cystine bridges form between Cys956–Cys1011, Cys957–Cys979, and Cys967–Cys976. Residues Ile1098–Cys1118 form a helical membrane-spanning segment. Topologically, residues Glu1119–Ala1123 are cytoplasmic. Residues Val1124 to Trp1144 traverse the membrane as a helical segment. A topological domain (lumenal) is located at residue Gly1145. Residues Ile1146–Phe1166 traverse the membrane as a helical segment. Over Cys1167–Gly1194 the chain is Cytoplasmic. The chain crosses the membrane as a helical span at residues Ser1195–Ala1215. Topologically, residues Lys1216–Arg1226 are lumenal. A helical membrane pass occupies residues Met1227 to Leu1247. Over Ser1248–Phe1277 the chain is Cytoplasmic. The tract at residues Leu1274–Phe1277 is required for location in lysosomes. Positions Leu1274–Phe1277 match the Di-leucine motif motif.

The protein belongs to the patched family. In terms of assembly, interacts (via the second lumenal domain) with NPC2. Interacts with TMEM97; the interaction may decrease NPC1 availability to the cell. Interacts with TIM1. Interacts with SLC38A9; this interaction inhibits cholesterol-mediated mTORC1 activation via its sterol transport activity. Post-translationally, N-glycosylated. In terms of tissue distribution, detected in liver (at protein level). Ubiquitous. Detected in adult heart, spleen, lung, liver, skeletal muscle, kidney, testis.

It is found in the late endosome membrane. The protein resides in the lysosome membrane. The enzyme catalyses cholesterol(in) = cholesterol(out). Its function is as follows. Intracellular cholesterol transporter which acts in concert with NPC2 and plays an important role in the egress of cholesterol from the endosomal/lysosomal compartment. Unesterified cholesterol that has been released from LDLs in the lumen of the late endosomes/lysosomes is transferred by NPC2 to the cholesterol-binding pocket in the N-terminal domain of NPC1. Cholesterol binds to NPC1 with the hydroxyl group buried in the binding pocket. May play a role in vesicular trafficking in glia, a process that may be crucial for maintaining the structural and functional integrity of nerve terminals. Inhibits cholesterol-mediated mTORC1 activation throught its interaction with SLC38A9. This is NPC intracellular cholesterol transporter 1 from Mus musculus (Mouse).